The following is an 874-amino-acid chain: Alanine--tRNA ligase (874 aa).

Residues His562, His566, Cys664, and His668 each contribute to the Zn(2+) site.

This sequence belongs to the class-II aminoacyl-tRNA synthetase family. It depends on Zn(2+) as a cofactor.

It is found in the cytoplasm. It catalyses the reaction tRNA(Ala) + L-alanine + ATP = L-alanyl-tRNA(Ala) + AMP + diphosphate. Catalyzes the attachment of alanine to tRNA(Ala) in a two-step reaction: alanine is first activated by ATP to form Ala-AMP and then transferred to the acceptor end of tRNA(Ala). Also edits incorrectly charged Ser-tRNA(Ala) and Gly-tRNA(Ala) via its editing domain. The protein is Alanine--tRNA ligase of Shewanella sediminis (strain HAW-EB3).